The chain runs to 363 residues: TBC1 domain family member whacked (363 aa).

The Rab-GAP TBC domain maps to 77 to 265; that stretch reads GIPKSVRPKA…RVWDCFLAEG (189 aa). Positions 335–363 are disordered; it reads KARRAKQKAQQEAESSGSGNGHRRNMPTL.

It localises to the apical cell membrane. Its subcellular location is the cytoplasmic vesicle. The protein localises to the cell projection. It is found in the filopodium. Essential for ensuring the polarized growth of tracheal seamless tubes. During seamless tube morphogenesis, likely to act as a GTPase-activating protein (GAP) for Rab35 to regulate vesicle trafficking from the recycling endosomes to the lumenal apical membrane to ensure the polarized dynein motor complex-dependent growth of seamless tubes along the proximodistal axis in tracheal terminal cells. When the terminal branch lumen is growing, Rab35-GTP is active and likely directs the transport of apical membrane vesicles from the soma to the distal tip of elongating terminal cell branches thus providing a continuous supply of apical membrane components as the lumen grows. Whereas when Rab35-GDP is inactivated, presumably by this GAP, apical membrane vesicles are transported to a central location adjacent to the terminal cell nucleus. The protein is TBC1 domain family member whacked of Drosophila melanogaster (Fruit fly).